The sequence spans 324 residues: Succinylglutamate desuccinylase (324 aa).

3 residues coordinate Zn(2+): His53, Glu56, and His148. The active site involves Glu211.

It belongs to the AspA/AstE family. Succinylglutamate desuccinylase subfamily. Zn(2+) is required as a cofactor.

The enzyme catalyses N-succinyl-L-glutamate + H2O = L-glutamate + succinate. Its pathway is amino-acid degradation; L-arginine degradation via AST pathway; L-glutamate and succinate from L-arginine: step 5/5. Transforms N(2)-succinylglutamate into succinate and glutamate. This chain is Succinylglutamate desuccinylase, found in Acinetobacter baumannii (strain SDF).